The chain runs to 175 residues: Snake venom metalloproteinase BpMP-1 (175 aa).

One can recognise a Peptidase M12B domain in the interval tyrosine 1 to lysine 175. Ca(2+)-binding residues include glutamate 3 and aspartate 74. 3 disulfide bridges follow: cysteine 98/cysteine 171, cysteine 131/cysteine 155, and cysteine 133/cysteine 138. Histidine 117 lines the Zn(2+) pocket. Glutamate 118 is a catalytic residue. Zn(2+) is bound by residues histidine 121 and histidine 127. Cysteine 171 and asparagine 174 together coordinate Ca(2+).

The protein belongs to the venom metalloproteinase (M12B) family. P-I subfamily. As to quaternary structure, monomer. Zn(2+) serves as cofactor. As to expression, expressed by the venom gland.

The protein resides in the secreted. With respect to regulation, inhibited by EDTA, 1,10-phenanthroline and beta-mercaptoethanol. Not inhibited by the serine protease inhibitors aprotinin and benzamidin. Functionally, non-hemorrhagic snake venom zinc metalloprotease that hydrolyzes the Aalpha-chain of fibrinogen, more slowly the Bbeta-chain and shows no effect on the gamma chain. Has no coagulant activity on bovine plasma and fibrinogen. The protein is Snake venom metalloproteinase BpMP-1 of Bothrops pauloensis (Neuwied's lancehead).